Reading from the N-terminus, the 813-residue chain is Enhancer of polycomb homolog 1 (813 aa).

Disordered stretches follow at residues 310-403 (FKHQ…PFAF), 484-513 (MLSS…SKDL), and 528-577 (FRPR…SSGS). Over residues 311–333 (KHQDATDSKEFKVNKQDKADLIR) the composition is skewed to basic and acidic residues. A Glycyl lysine isopeptide (Lys-Gly) (interchain with G-Cter in SUMO2) cross-link involves residue lysine 319. Over residues 346–361 (PPSAAAPQQQSPAALP) the composition is skewed to low complexity. Positions 486–513 (SSPQPSPVNQFANTSEPNTSDRSSSKDL) are enriched in polar residues. Residue serine 538 is modified to Phosphoserine. The span at 564 to 577 (TCSTSTQNRSSSGS) shows a compositional bias: low complexity. Lysine 650 participates in a covalent cross-link: Glycyl lysine isopeptide (Lys-Gly) (interchain with G-Cter in SUMO2). A disordered region spans residues 779-813 (VPSSSSVDSVPRENHESEKPALNNIADNTVAMEVT). Residues 788 to 797 (VPRENHESEK) are compositionally biased toward basic and acidic residues.

Belongs to the enhancer of polycomb family. As to quaternary structure, component of the NuA4 histone acetyltransferase complex which contains the catalytic subunit KAT5/TIP60 and the subunits EP400, TRRAP/PAF400, BRD8/SMAP, EPC1, DMAP1/DNMAP1, RUVBL1/TIP49, RUVBL2, ING3, actin, ACTL6A/BAF53A, MORF4L1/MRG15, MORF4L2/MRGX, MRGBP, YEATS4/GAS41, VPS72/YL1 and MEAF6. KAT5/TIP60, EPC1, and ING3 together constitute a minimal HAT complex termed Piccolo NuA4. Component of a NuA4-related complex which contains EP400, TRRAP/PAF400, SRCAP, BRD8/SMAP, EPC1, DMAP1/DNMAP1, RUVBL1/TIP49, RUVBL2, actin, ACTL6A/BAF53A, VPS72 and YEATS4/GAS41. Interacts with TRIM27. Interacts with MBTD1; interaction is direct and promotes recruitment of MBTD1 into the NuA4 histone acetyltransferase complex. As to expression, expressed in adult brain, heart, kidney, liver, lung, skeletal muscle and testis. Expressed in male germ cells, present in round spermatids of steps 1 to 4.

The protein resides in the nucleus. Its subcellular location is the cytoplasm. Its function is as follows. Component of the NuA4 histone acetyltransferase (HAT) complex, a multiprotein complex involved in transcriptional activation of select genes principally by acetylation of nucleosomal histones H4 and H2A. The NuA4 complex plays a direct role in repair of DNA double-strand breaks (DSBs) by promoting homologous recombination (HR). The NuA4 complex is also required for spermatid development by promoting acetylation of histones: histone acetylation is required for histone replacement during the transition from round to elongating spermatids. In the NuA4 complex, EPC1 is required to recruit MBTD1 into the complex. The chain is Enhancer of polycomb homolog 1 from Mus musculus (Mouse).